A 295-amino-acid polypeptide reads, in one-letter code: uncharacterized protein (295 aa).

The segment covering 57 to 67 (RKLLVKQKRKS) has biased composition (basic residues). Positions 57-94 (RKLLVKQKRKSNKEFQSNIIKKRKDEERKGTLKTEQAN) are disordered. The segment covering 79–88 (RKDEERKGTL) has biased composition (basic and acidic residues). Coiled-coil stretches lie at residues 87–116 (TLKT…YDQY) and 259–286 (DVLT…LGER).

The protein localises to the nucleus. This is an uncharacterized protein from Schizosaccharomyces pombe (strain 972 / ATCC 24843) (Fission yeast).